A 245-amino-acid polypeptide reads, in one-letter code: uncharacterized protein (245 aa).

The first 19 residues, 1-19 (MKLTQFISYAILSLSGVQA), serve as a signal peptide directing secretion.

Its subcellular location is the secreted. This is an uncharacterized protein from Arthroderma benhamiae (strain ATCC MYA-4681 / CBS 112371) (Trichophyton mentagrophytes).